A 130-amino-acid polypeptide reads, in one-letter code: ATP synthase epsilon chain (130 aa).

The protein belongs to the ATPase epsilon chain family. In terms of assembly, F-type ATPases have 2 components, CF(1) - the catalytic core - and CF(0) - the membrane proton channel. CF(1) has five subunits: alpha(3), beta(3), gamma(1), delta(1), epsilon(1). CF(0) has three main subunits: a, b and c.

Its subcellular location is the cell membrane. Produces ATP from ADP in the presence of a proton gradient across the membrane. In Nocardia farcinica (strain IFM 10152), this protein is ATP synthase epsilon chain.